We begin with the raw amino-acid sequence, 355 residues long: Uroporphyrinogen decarboxylase (355 aa).

Substrate-binding positions include 38–42 (RQAGR), Asp87, Tyr162, Ser217, and His331.

The protein belongs to the uroporphyrinogen decarboxylase family. Homodimer.

It localises to the cytoplasm. The catalysed reaction is uroporphyrinogen III + 4 H(+) = coproporphyrinogen III + 4 CO2. Its pathway is porphyrin-containing compound metabolism; protoporphyrin-IX biosynthesis; coproporphyrinogen-III from 5-aminolevulinate: step 4/4. Catalyzes the decarboxylation of four acetate groups of uroporphyrinogen-III to yield coproporphyrinogen-III. This Streptomyces coelicolor (strain ATCC BAA-471 / A3(2) / M145) protein is Uroporphyrinogen decarboxylase.